Reading from the N-terminus, the 428-residue chain is Glutamate-1-semialdehyde 2,1-aminomutase (428 aa).

At Lys-267 the chain carries N6-(pyridoxal phosphate)lysine.

This sequence belongs to the class-III pyridoxal-phosphate-dependent aminotransferase family. HemL subfamily. In terms of assembly, homodimer. It depends on pyridoxal 5'-phosphate as a cofactor.

It localises to the cytoplasm. The enzyme catalyses (S)-4-amino-5-oxopentanoate = 5-aminolevulinate. It functions in the pathway porphyrin-containing compound metabolism; protoporphyrin-IX biosynthesis; 5-aminolevulinate from L-glutamyl-tRNA(Glu): step 2/2. The sequence is that of Glutamate-1-semialdehyde 2,1-aminomutase from Flavobacterium psychrophilum (strain ATCC 49511 / DSM 21280 / CIP 103535 / JIP02/86).